The chain runs to 243 residues: Carboxy-S-adenosyl-L-methionine synthase (243 aa).

S-adenosyl-L-methionine-binding positions include Y40, 65–67 (GCS), 90–91 (DN), 118–119 (DI), N133, and R200.

This sequence belongs to the class I-like SAM-binding methyltransferase superfamily. Cx-SAM synthase family. Homodimer.

The enzyme catalyses prephenate + S-adenosyl-L-methionine = carboxy-S-adenosyl-L-methionine + 3-phenylpyruvate + H2O. Its function is as follows. Catalyzes the conversion of S-adenosyl-L-methionine (SAM) to carboxy-S-adenosyl-L-methionine (Cx-SAM). The protein is Carboxy-S-adenosyl-L-methionine synthase of Shewanella oneidensis (strain ATCC 700550 / JCM 31522 / CIP 106686 / LMG 19005 / NCIMB 14063 / MR-1).